Here is a 754-residue protein sequence, read N- to C-terminus: 84 kDa readthrough protein (754 aa).

Disordered regions lie at residues 103–131 (RGEG…QGQT) and 713–740 (KNTR…KSGV). A compositionally biased stretch (polar residues) spans 713–730 (KNTRMYPSTSGQSYNSYK).

It belongs to the virgaviridae capsid protein family.

It is found in the virion. Functionally, minor capsid protein involved in virus transmission by the vector. This Soil-borne wheat mosaic virus (strain United States/Nebraska/1981) (SBWMV) protein is 84 kDa readthrough protein (CP-CP2).